A 253-amino-acid chain; its full sequence is Tryptophan synthase alpha chain (253 aa).

Catalysis depends on proton acceptor residues glutamate 45 and aspartate 56.

Belongs to the TrpA family. As to quaternary structure, tetramer of two alpha and two beta chains.

It carries out the reaction (1S,2R)-1-C-(indol-3-yl)glycerol 3-phosphate + L-serine = D-glyceraldehyde 3-phosphate + L-tryptophan + H2O. The protein operates within amino-acid biosynthesis; L-tryptophan biosynthesis; L-tryptophan from chorismate: step 5/5. In terms of biological role, the alpha subunit is responsible for the aldol cleavage of indoleglycerol phosphate to indole and glyceraldehyde 3-phosphate. This chain is Tryptophan synthase alpha chain, found in Flavobacterium psychrophilum (strain ATCC 49511 / DSM 21280 / CIP 103535 / JIP02/86).